A 123-amino-acid chain; its full sequence is Protein lgg-1 (123 aa).

A lipid anchor (Phosphatidylethanolamine amidated glycine) is attached at glycine 116. Positions 117-123 (GEVEKKE) are cleaved as a propeptide — removed in mature form.

Belongs to the ATG8 family. As to quaternary structure, interacts with sepa-1 (via the LIR motifs); the interaction is direct. Interacts with allo-1 (via the LIR motif). Interacts with sqst-1 (via the LIR motifs); the interaction is direct. Both lipidated and unlipidated forms interact with epg-7 (via the LIR motif); the interaction is direct. Interacts with epg-2 (via the LIR motifs); the interaction is direct. Interacts with atg-13; the interaction is direct. Interacts with unc-51 (via the LIR motif); the interaction is direct. Interacts with atg-7; the interaction is direct. Interacts with atg-3. The interaction with atg-7 and atg-3 may be required for the lipidation of lgg-1. In terms of processing, cleaved by atg-4.1 and/or atg-4.2, after Gly-116 to form a thioester bond with 'Cys-523' of atg-7 (E1-like activating enzyme) before being transferred to 'Cys-255' of atg-3 (E2 conjugating enzyme), in order to be amidated with phosphatidylethanolamine. This lipid modification anchors lgg-1 to membranes and can be reversed by atg-4.2, releasing soluble lgg-1. C-terminal cleavage is essential for autophagosome initiation and biogenesis. Lipidation is not essential for autophagy or development but the lipidated form is involved in cargo recognition and autophagosome biogenesis. Lipidation regulates lgg-2-positive autophagosome formation. In terms of tissue distribution, expressed in PLML touch receptor neuron and in the ventral nerve cord. Expressed in AIY interneurons.

The protein resides in the preautophagosomal structure. It localises to the cytoplasmic vesicle. The protein localises to the autophagosome. Its subcellular location is the autophagosome membrane. It is found in the lysosome lumen. The protein resides in the mitochondrion. It localises to the cytoplasm. The protein localises to the phagosome membrane. Its subcellular location is the cell membrane. It is found in the cell projection. The protein resides in the dendrite. It localises to the perikaryon. In terms of biological role, ubiquitin-like modifier involved in the formation of autophagosomal vacuoles (autophagosomes). When lipidated mediates tethering between adjacent membranes and stimulates membrane fusion during autophagy. Recruits lipidated-lgg-2 to maturing autophagosomes. Acts in the aggrephagy pathway, which is the macroautophagic degradation of ubiquitinated protein aggregates, and preferentially interacts with autophagy proteins and substrates containing LIR motifs to mediate autophagosome formation and protein aggregate degradation. In particular, binds to components of the unc-51-atg-13 complex to regulate autophagosome formation and cargo sequestration. Required for the degradation of specific sepa-1- and sqst-1-containing protein aggregates during embryogenesis. Involved in allophagy, which is an autophagic process in which paternal mitochondria and organelles are degraded during fertilization, and moreover is required for the formation of lgg-2-positive allophagic autophagosomes in embryos. Involved in the clearance of apoptotic cells by promoting the delivery of engulfed apoptotic cells to the lysosome. Plays a role in the distribution and clearance of germ cell specific P-granules from somatic cells. Also plays a role in the autophagy-mediated degradation of ribosomal RNA and ribosomal proteins in lysosomes. Involved in xenophagy, the autophagy-mediated degradation of pathogens and pathogen products, such as toxins. Required for normal survival when exposed to pathogenic bacteria S.typhimurium probably by promoting autophagic degradation of intracellular S.typhimurium. Also plays a role in membrane-pore repair. Plays a role in mitophagy. Essential for dauer development and longevity, including longevity in response to moderate, short-term heat shock, also known as a hormetic heat shock. This is Protein lgg-1 from Caenorhabditis elegans.